The chain runs to 529 residues: ATP synthase F(1) complex catalytic subunit beta, mitochondrial (529 aa).

The transit peptide at 1 to 46 (MLSLVGRVASASASGALRGLNPLAALPQAHLLLRTAPAGVHPARDY) directs the protein to the mitochondrion. O-linked (GlcNAc) serine glycosylation is present at Ser-106. Residues Lys-124, Lys-133, and Lys-161 each carry the N6-acetyllysine; alternate modification. Lys-124, Lys-133, and Lys-161 each carry N6-succinyllysine; alternate. Lys-198 carries the N6-acetyllysine modification. Positions 209, 210, 211, 212, 213, and 214 each coordinate ADP. ATP is bound at residue Gly-209. Positions 209, 210, 211, 212, and 213 each coordinate phosphate. The ATP site is built by Gly-211, Lys-212, Thr-213, and Val-214. Thr-213 serves as a coordination point for Mg(2+). Glu-238 lines the Mg(2+) pocket. Arg-239 provides a ligand contact to ATP. 2 positions are modified to N6-acetyllysine; alternate: Lys-259 and Lys-264. N6-succinyllysine; alternate is present on residues Lys-259 and Lys-264. The residue at position 312 (Thr-312) is a Phosphothreonine. Ser-415 carries the phosphoserine modification. Residue Lys-426 is modified to N6-acetyllysine. Ser-433 is subject to Phosphoserine. N6-acetyllysine is present on residues Lys-480 and Lys-485. Residue Lys-522 is modified to N6-acetyllysine; alternate. Lys-522 carries the N6-succinyllysine; alternate modification. Position 529 is a phosphoserine (Ser-529).

Belongs to the ATPase alpha/beta chains family. Homotrimer. Component of the ATP synthase complex composed at least of ATP5F1A/subunit alpha, ATP5F1B/subunit beta, ATP5MC1/subunit c (homooctomer), MT-ATP6/subunit a, MT-ATP8/subunit 8, ATP5ME/subunit e, ATP5MF/subunit f, ATP5MG/subunit g, ATP5MK/subunit k, ATP5MJ/subunit j, ATP5F1C/subunit gamma, ATP5F1D/subunit delta, ATP5F1E/subunit epsilon, ATP5PF/subunit F6, ATP5PB/subunit b, ATP5PD/subunit d, ATP5PO/subunit OSCP. ATP synthase complex consists of a soluble F(1) head domain (subunits alpha(3) and beta(3)) - the catalytic core - and a membrane F(0) domain - the membrane proton channel (subunits c, a, 8, e, f, g, k and j). These two domains are linked by a central stalk (subunits gamma, delta, and epsilon) rotating inside the F1 region and a stationary peripheral stalk (subunits F6, b, d, and OSCP). Interacts with PPIF. Interacts with BCL2L1 isoform BCL-X(L); the interaction mediates the association of BCL2L1 isoform BCL-X(L) with the mitochondrial membrane F(1)F(0) ATP synthase and enhances neurons metabolic efficiency. Interacts with CLN5 and PPT1. Interacts with S100A1; this interaction increases F1-ATPase activity. Interacts with MTLN. Interacts with TTC5/STRAP; the interaction results in decreased mitochondrial ATP production.

It is found in the mitochondrion inner membrane. The catalysed reaction is ATP + H2O + 4 H(+)(in) = ADP + phosphate + 5 H(+)(out). In terms of biological role, catalytic subunit beta, of the soluble F(1) head domain within the mitochondrial ATP synthase complex (F(1)F(0) ATP synthase or complex V) that produces ATP from ADP and phosphate inorganique in the presence of a proton gradient across the membrane which is generated by electron transport complexes of the respiratory chain. With the non-catalytic subunit alpha (ATP5F1A), forms the catalytic core in the F(1) domain. ATP synthase complex consist of two structural domains, F(1) - containing the extramembraneous catalytic core, and F(0) - containing the membrane proton channel, linked together by a central stalk and a peripheral stalk. During catalysis, ATP synthesis in the catalytic domain of F(1) is coupled via a rotary mechanism of the central stalk subunits to proton translocation. Its function is as follows. Catalytic subunit beta, of the mitochondrial membrane ATP synthase complex (F(1)F(0) ATP synthase or Complex V) that produces ATP from ADP in the presence of a proton gradient across the membrane which is generated by electron transport complexes of the respiratory chain. ATP synthase complex consist of a soluble F(1) head domain - the catalytic core - and a membrane F(1) domain - the membrane proton channel. These two domains are linked by a central stalk rotating inside the F(1) region and a stationary peripheral stalk. During catalysis, ATP synthesis in the catalytic domain of F(1) is coupled via a rotary mechanism of the central stalk subunits to proton translocation. In vivo, can only synthesize ATP although its ATP hydrolase activity can be activated artificially in vitro. With the subunit alpha (ATP5F1A), forms the catalytic core in the F(1) domain. The sequence is that of ATP synthase F(1) complex catalytic subunit beta, mitochondrial from Rattus norvegicus (Rat).